Reading from the N-terminus, the 37-residue chain is Natriuretic peptide PNP (37 aa).

Cys-14 and Cys-30 are joined by a disulfide.

As to expression, expressed by the venom gland.

Its subcellular location is the secreted. Its function is as follows. Increases urine flow and decreases blood pressure when administered to rats by intravenous injection. Inhibits thrombin-induced platelet aggregation. Stimulates cGMP production via the natriuretic peptide receptor-A (NPR1). The polypeptide is Natriuretic peptide PNP (Pseudocerastes persicus (Persian horned viper)).